A 326-amino-acid polypeptide reads, in one-letter code: MRPLMLQGHERSITQIKYNREGDLLFSSSKDQKPNVWYSLNGERLGTYDGHQGAVWCLDVDWESRKLITGAGDMTTKLWDVEYGTVIASIATKSSVRTSNFSFSGNQAAYSTDKAMGQNCELFIIDVRNADSTLSEQEPTLRIPMVESKITSMQWGPLDETIITGHDNGNIAIWDVRKGQKVVDSGVDHAAGINDMQLSKDGTMFVTASKDNTAKLFDAESLMCLKTYKTERPVNSAAISPIFDHVVLGGGQDAMEVTTTSTKAGKFDSRFFHLIYEEEFARLKGHFGPINSLAFHPDGKSYASGGEDGFVRVQSFDSTYFENIFE.

5 WD repeats span residues 8–47, 50–89, 145–184, 188–227, and 285–326; these read GHERSITQIKYNREGDLLFSSSKDQKPNVWYSLNGERLGT, GHQGAVWCLDVDWESRKLITGAGDMTTKLWDVEYGTVIAS, MVESKITSMQWGPLDETIITGHDNGNIAIWDVRKGQKVVD, DHAAGINDMQLSKDGTMFVTASKDNTAKLFDAESLMCLKT, and GHFG…NIFE.

The protein belongs to the eIF-3 subunit I family. In terms of assembly, component of the eukaryotic translation initiation factor 3 (eIF-3) complex. The eIF-3 complex interacts with pix.

The protein localises to the cytoplasm. Functionally, component of the eukaryotic translation initiation factor 3 (eIF-3) complex, which is involved in protein synthesis of a specialized repertoire of mRNAs and, together with other initiation factors, stimulates binding of mRNA and methionyl-tRNAi to the 40S ribosome. The eIF-3 complex specifically targets and initiates translation of a subset of mRNAs involved in cell proliferation. This is Eukaryotic translation initiation factor 3 subunit I from Drosophila grimshawi (Hawaiian fruit fly).